Here is a 247-residue protein sequence, read N- to C-terminus: Adenosylcobinamide-GDP ribazoletransferase (247 aa).

5 consecutive transmembrane segments (helical) span residues 34 to 54 (IITFPLIGLLLGAISGLVFMV), 59 to 79 (CGVPLAALFSVLVLALMTGGF), 113 to 133 (GGLALIFVVLAKILVLSELTL), 138 to 158 (ILASLAAACAVSRGTAALLMY), and 194 to 214 (VLLPGMHGVAAMVVTMVAIFI).

This sequence belongs to the CobS family. The cofactor is Mg(2+).

The protein resides in the cell inner membrane. It carries out the reaction alpha-ribazole + adenosylcob(III)inamide-GDP = adenosylcob(III)alamin + GMP + H(+). It catalyses the reaction alpha-ribazole 5'-phosphate + adenosylcob(III)inamide-GDP = adenosylcob(III)alamin 5'-phosphate + GMP + H(+). It functions in the pathway cofactor biosynthesis; adenosylcobalamin biosynthesis; adenosylcobalamin from cob(II)yrinate a,c-diamide: step 7/7. Joins adenosylcobinamide-GDP and alpha-ribazole to generate adenosylcobalamin (Ado-cobalamin). Also synthesizes adenosylcobalamin 5'-phosphate from adenosylcobinamide-GDP and alpha-ribazole 5'-phosphate. The protein is Adenosylcobinamide-GDP ribazoletransferase of Escherichia coli O127:H6 (strain E2348/69 / EPEC).